Reading from the N-terminus, the 53-residue chain is uncharacterized protein (53 aa).

Residues M1 to N10 are compositionally biased toward polar residues. The interval M1–S25 is disordered.

This is an uncharacterized protein from Saccharomyces cerevisiae (strain ATCC 204508 / S288c) (Baker's yeast).